The primary structure comprises 107 residues: Large ribosomal subunit protein uL24 (107 aa).

This sequence belongs to the universal ribosomal protein uL24 family. As to quaternary structure, part of the 50S ribosomal subunit.

In terms of biological role, one of two assembly initiator proteins, it binds directly to the 5'-end of the 23S rRNA, where it nucleates assembly of the 50S subunit. One of the proteins that surrounds the polypeptide exit tunnel on the outside of the subunit. This Thiobacillus denitrificans (strain ATCC 25259 / T1) protein is Large ribosomal subunit protein uL24.